Consider the following 96-residue polypeptide: UPF0125 protein YfjF (96 aa).

The protein belongs to the UPF0125 (RnfH) family.

This chain is UPF0125 protein YfjF (yfjF), found in Escherichia coli O157:H7.